Here is a 393-residue protein sequence, read N- to C-terminus: Phosphoglycerate kinase (393 aa).

Residues Asp-21–Asn-23, Arg-36, His-59–Arg-62, Arg-114, and Arg-147 each bind substrate. ATP-binding positions include Lys-198, Glu-314, and Gly-340–Thr-343.

It belongs to the phosphoglycerate kinase family. As to quaternary structure, monomer.

It localises to the cytoplasm. It catalyses the reaction (2R)-3-phosphoglycerate + ATP = (2R)-3-phospho-glyceroyl phosphate + ADP. It functions in the pathway carbohydrate degradation; glycolysis; pyruvate from D-glyceraldehyde 3-phosphate: step 2/5. In Buchnera aphidicola subsp. Baizongia pistaciae (strain Bp), this protein is Phosphoglycerate kinase.